Reading from the N-terminus, the 356-residue chain is Tyrosine recombinase XerS (356 aa).

One can recognise a Core-binding (CB) domain in the interval 16-121 (VMPPYVLEYY…ALSSLYKYLT (106 aa)). The region spanning 169 to 354 (GFLDYIDSEY…INEEQKNALD (186 aa)) is the Tyr recombinase domain. Catalysis depends on residues Arg210, Lys234, His306, Arg309, and His332. Tyr341 (O-(3'-phospho-DNA)-tyrosine intermediate) is an active-site residue.

The protein belongs to the 'phage' integrase family. XerS subfamily.

The protein resides in the cytoplasm. Its activity is regulated as follows. FtsK is required for recombination. In terms of biological role, site-specific tyrosine recombinase, which acts by catalyzing the cutting and rejoining of the recombining DNA molecules. Essential to convert dimers of the bacterial chromosome into monomers to permit their segregation at cell division. This Lactococcus lactis subsp. cremoris (strain SK11) protein is Tyrosine recombinase XerS.